Reading from the N-terminus, the 344-residue chain is Beta-1,4-galactosyltransferase 4 (344 aa).

Residues 1 to 12 (MGCNPPYHLSYR) are Cytoplasmic-facing. Residues 13–38 (LRLLLLFTLCLTVVGWATSNYFVGAI) form a helical; Signal-anchor for type II membrane protein membrane-spanning segment. Residues 39–344 (QVIPKAKDFM…NITVDFWTAA (306 aa)) are Lumenal-facing. A disulfide bridge links Cys-77 with Cys-118. UDP-alpha-D-galactose contacts are provided by residues 129–133 (PHRNR), 168–170 (FNR), and 195–196 (VD). An intrachain disulfide couples Cys-189 to Cys-208. Asp-196 contacts Mn(2+). A glycan (N-linked (GlcNAc...) asparagine) is linked at Asn-220. 2 residues coordinate UDP-alpha-D-galactose: Tyr-224 and Trp-256. 258–261 (GEDD) contributes to the N-acetyl-D-glucosamine binding site. His-289 lines the Mn(2+) pocket. 289 to 291 (HTR) is a binding site for UDP-alpha-D-galactose. Residue Arg-301 coordinates N-acetyl-D-glucosamine. A glycan (N-linked (GlcNAc...) asparagine) is linked at Asn-335.

The protein belongs to the glycosyltransferase 7 family. In terms of assembly, interacts with SLC35A2/UGT1. It depends on Mn(2+) as a cofactor.

Its subcellular location is the golgi apparatus membrane. The protein localises to the secreted. The catalysed reaction is N-acetyl-D-glucosamine + UDP-alpha-D-galactose = beta-D-galactosyl-(1-&gt;4)-N-acetyl-D-glucosamine + UDP + H(+). It catalyses the reaction a beta-D-GlcNAc-(1-&gt;3)-beta-D-Gal-(1-&gt;4)-beta-D-Glc-(1&lt;-&gt;1)-Cer(d18:1(4E)) + UDP-alpha-D-galactose = a neolactoside nLc4Cer(d18:1(4E)) + UDP + H(+). The enzyme catalyses 3-O-{beta-D-galactosyl-(1-&gt;3)-[6-O-sulfo-N-acetyl-beta-D-glucosaminyl-(1-&gt;6)]-N-acetyl-alpha-D-galactosaminyl}-L-seryl-[protein] + UDP-alpha-D-galactose = 3-O-{beta-D-galactosyl-(1-&gt;3)-[beta-D-galactosyl-(1-&gt;4)-6-O-sulfo-N-acetyl-beta-D-glucosaminyl-(1-&gt;6)]-N-acetyl-alpha-D-galactosaminyl}-L-seryl-[protein] + UDP + H(+). It carries out the reaction 3-O-{beta-D-galactosyl-(1-&gt;3)-[6-O-sulfo-N-acetyl-beta-D-glucosaminyl-(1-&gt;6)]-N-acetyl-alpha-D-galactosaminyl}-L-threonyl-[protein] + UDP-alpha-D-galactose = 3-O-{beta-D-galactosyl-(1-&gt;3)-[beta-D-galactosyl-(1-&gt;4)-6-O-sulfo-N-acetyl-beta-D-glucosaminyl-(1-&gt;6)]-N-acetyl-alpha-D-galactosaminyl}-L-threonyl-[protein] + UDP + H(+). It functions in the pathway protein modification; protein glycosylation. The protein operates within glycolipid biosynthesis. Its function is as follows. Galactose (Gal) transferase involved in the synthesis of terminal N-acetyllactosamine (LacNac) unit present on glycan chains of glycoproteins and glycosphingolipids. Catalyzes the transfer of Gal residue via a beta1-&gt;4 linkage from UDP-Gal to the non-reducing terminal N-acetyl glucosamine 6-O-sulfate (6-O-sulfoGlcNAc) in the linearly growing chain of both N- and O-linked keratan sulfate proteoglycans. Cooperates with B3GNT7 N-acetyl glucosamine transferase and CHST6 and CHST1 sulfotransferases to construct and elongate mono- and disulfated disaccharide units [-&gt;3Galbeta1-&gt;4(6-sulfoGlcNAcbeta)1-&gt;] and [-&gt;3(6-sulfoGalbeta)1-&gt;4(6-sulfoGlcNAcbeta)1-&gt;] within keratan sulfate polymer. Transfers Gal residue via a beta1-&gt;4 linkage to terminal 6-O-sulfoGlcNAc within the LacNac unit of core 2 O-glycans forming 6-sulfo-sialyl-Lewis X (sLex). May contribute to the generation of sLex epitope on mucin-type glycoproteins that serve as ligands for SELL/L-selectin, a major regulator of leukocyte migration. In the biosynthesis pathway of neolacto-series glycosphingolipids, transfers Gal residue via a beta1-&gt;4 linkage to terminal GlcNAc of a lactotriaosylceramide (Lc3Cer) acceptor to form a neolactotetraosylceramide. The polypeptide is Beta-1,4-galactosyltransferase 4 (Mus musculus (Mouse)).